The sequence spans 123 residues: WAP four-disulfide core domain protein 2 (123 aa).

Positions M1–G28 are cleaved as a signal peptide. WAP domains follow at residues G30 to C71 and P74 to N122. 8 disulfides stabilise this stretch: C37-C63, C46-C67, C50-C62, C56-C71, C81-C109, C92-C113, C96-C108, and C102-C118. N-linked (GlcNAc...) asparagine glycosylation is present at N45.

In terms of assembly, homotrimer; disulfide-linked. As to expression, epididymis.

Its subcellular location is the secreted. In terms of biological role, broad range protease inhibitor. The sequence is that of WAP four-disulfide core domain protein 2 (WFDC2) from Oryctolagus cuniculus (Rabbit).